Consider the following 758-residue polypeptide: Spastin (758 aa).

Positions M1–Y103 are disordered. Over M1–P121 the chain is Cytoplasmic. Residues M1 to A210 are required for localization to punctate cytoplasmic foci. Low complexity-rich tracts occupy residues S8–A28, R43–S58, S66–P76, and T85–P95. Residues I122–Y142 constitute an intramembrane region (helical). Topologically, residues L143–I758 are cytoplasmic. Composition is skewed to polar residues over residues S169–S180 and Q189–Q198. The disordered stretch occupies residues S169 to P202. The tract at residues M208–I758 is sufficient for interaction with microtubules and microtubule severing. The MIT domain maps to H233 to L308. The tract at residues R353–P454 is disordered. Composition is skewed to polar residues over residues N390–G406 and Q425–P454. The required for interaction with microtubules stretch occupies residues N443–V455. G523–T530 is an ATP binding site.

The protein belongs to the AAA ATPase family. Spastin subfamily. Homohexamer. The homohexamer is stabilized by ATP-binding. The homohexamer may adopt a ring conformation through which microtubules pass prior to being severed. Interacts with microtubules. Interacts with atl; may be involved in microtubule dynamics.

The protein localises to the membrane. Its subcellular location is the cytoplasm. It is found in the cytoskeleton. The protein resides in the microtubule organizing center. It localises to the centrosome. The protein localises to the chromosome. Its subcellular location is the lipid droplet. The catalysed reaction is n ATP + n H2O + a microtubule = n ADP + n phosphate + (n+1) alpha/beta tubulin heterodimers.. In terms of biological role, ATP-dependent microtubule severing protein. Stimulates microtubule minus-end depolymerization and poleward microtubule flux in the mitotic spindle. Regulates microtubule stability in the neuromuscular junction synapse. Involved in lipid metabolism by regulating the size and distribution of lipid droplets. Involved in axon regeneration by regulating microtubule severing. This Drosophila sechellia (Fruit fly) protein is Spastin.